Here is a 682-residue protein sequence, read N- to C-terminus: Protein SPT2 homolog (682 aa).

The segment at 1–569 (MDFREILLIA…PLLSGYRSAQ (569 aa)) is important for interaction with DNA. Residue Lys37 forms a Glycyl lysine isopeptide (Lys-Gly) (interchain with G-Cter in SUMO2) linkage. Residues 46–82 (AFLRRKEEELRQKALEEKKRKEELVKKRIELKHDKKA) are a coiled coil. Positions 80-170 (KKARAMAKRT…SAPSPMNFTD (91 aa)) are disordered. Over residues 101–111 (VEEKTKKKQLV) the composition is skewed to basic and acidic residues. Positions 121–131 (QEYDVEEEDFI) are enriched in acidic residues. A compositionally biased stretch (low complexity) spans 156–165 (KAPLKSAPSP). Lys186 participates in a covalent cross-link: Glycyl lysine isopeptide (Lys-Gly) (interchain with G-Cter in SUMO2). A compositionally biased stretch (basic and acidic residues) spans 187-208 (VVKKAEDRPLTAEELREREFLE). Disordered regions lie at residues 187-533 (VVKK…TKPR) and 549-595 (RSSN…DEYD). Composition is skewed to polar residues over residues 267–280 (STASEKQAALSSPK), 317–334 (STCSPSVPKTPASGTQKS), 371–393 (PGSNSGSAPGQPNPGTARPTLSS), 400–409 (QNGSSSSGPE), and 419–432 (ASNSHLSGRTLNGT). At Ser277 the chain carries Phosphoserine. 2 stretches are compositionally biased toward low complexity: residues 435 to 460 (PGRPASSSSGPGRPISGSAGSGRPVG) and 490 to 504 (SGPGRSISGSIPAGR). Residues 570-682 (GPQRLPFPTG…RRKAKKLKRH (113 aa)) are important for interaction with histones. Lys581 bears the N6-acetyllysine mark. Over residues 586-595 (YEEDDDDEYD) the composition is skewed to acidic residues. Ser596 is modified (phosphoserine). Composition is skewed to basic and acidic residues over residues 641-652 (SWKEQQKEEAKS) and 663-672 (EMRREEEELK). A disordered region spans residues 641 to 682 (SWKEQQKEEAKSLRLGMQEDLEEMRREEEELKRRKAKKLKRH). Residues 642–682 (WKEQQKEEAKSLRLGMQEDLEEMRREEEELKRRKAKKLKRH) are a coiled coil. Positions 673 to 682 (RRKAKKLKRH) are enriched in basic residues.

Belongs to the SPT2 family. As to quaternary structure, interacts with histones. Interacts with a heterotetrameric complex formed by histone H3 and H4, especially when the histone tetramer is not bound to DNA. Interacts with histone H3.3.

It localises to the nucleus. The protein resides in the nucleolus. In terms of biological role, histone chaperone that stabilizes pre-existing histone tetramers and regulates replication-independent histone exchange on chromatin. Required for normal chromatin refolding in the coding region of transcribed genes, and for the suppression of spurious transcription. Binds DNA and histones and promotes nucleosome assembly (in vitro). Facilitates formation of tetrameric histone complexes containing histone H3 and H4. Modulates RNA polymerase 1-mediated transcription. Binds DNA, with a preference for branched DNA species, such as Y-form DNA and Holliday junction DNA. The polypeptide is Protein SPT2 homolog (Spty2d1) (Mus musculus (Mouse)).